Reading from the N-terminus, the 690-residue chain is Amino-acid acetyltransferase, mitochondrial (690 aa).

The tract at residues 62-93 is disordered; sequence RFPSVKKPKPPIPRQNQGAVETQSGKENEKPG. Residues 75–84 show a composition bias toward polar residues; the sequence is RQNQGAVETQ. The N-acetyltransferase domain occupies 508–679; it reads DGHHLTLDDP…DYEAVCRSIQ (172 aa).

It belongs to the acetyltransferase family.

It localises to the mitochondrion. The enzyme catalyses L-glutamate + acetyl-CoA = N-acetyl-L-glutamate + CoA + H(+). It functions in the pathway amino-acid biosynthesis; L-arginine biosynthesis; N(2)-acetyl-L-ornithine from L-glutamate: step 1/4. Its function is as follows. N-acetylglutamate synthase involved in arginine biosynthesis. This Talaromyces stipitatus (strain ATCC 10500 / CBS 375.48 / QM 6759 / NRRL 1006) (Penicillium stipitatum) protein is Amino-acid acetyltransferase, mitochondrial (arg2).